A 129-amino-acid polypeptide reads, in one-letter code: Small ribosomal subunit protein uS11 (129 aa).

It belongs to the universal ribosomal protein uS11 family. Part of the 30S ribosomal subunit. Interacts with proteins S7 and S18. Binds to IF-3.

Functionally, located on the platform of the 30S subunit, it bridges several disparate RNA helices of the 16S rRNA. Forms part of the Shine-Dalgarno cleft in the 70S ribosome. In Buchnera aphidicola subsp. Baizongia pistaciae (strain Bp), this protein is Small ribosomal subunit protein uS11.